The chain runs to 185 residues: ATP-dependent protease subunit HslV (185 aa).

The active site involves T2. 3 residues coordinate Na(+): G157, C160, and T163.

Belongs to the peptidase T1B family. HslV subfamily. A double ring-shaped homohexamer of HslV is capped on each side by a ring-shaped HslU homohexamer. The assembly of the HslU/HslV complex is dependent on binding of ATP.

The protein resides in the cytoplasm. It carries out the reaction ATP-dependent cleavage of peptide bonds with broad specificity.. Its activity is regulated as follows. Allosterically activated by HslU binding. Protease subunit of a proteasome-like degradation complex believed to be a general protein degrading machinery. The sequence is that of ATP-dependent protease subunit HslV from Vibrio cholerae serotype O1 (strain ATCC 39315 / El Tor Inaba N16961).